We begin with the raw amino-acid sequence, 412 residues long: Arginine biosynthesis bifunctional protein ArgJ (412 aa).

Positions 155, 181, 192, 279, 407, and 412 each coordinate substrate. Thr-192 functions as the Nucleophile in the catalytic mechanism.

It belongs to the ArgJ family. As to quaternary structure, heterotetramer of two alpha and two beta chains.

It localises to the cytoplasm. The catalysed reaction is N(2)-acetyl-L-ornithine + L-glutamate = N-acetyl-L-glutamate + L-ornithine. It catalyses the reaction L-glutamate + acetyl-CoA = N-acetyl-L-glutamate + CoA + H(+). The protein operates within amino-acid biosynthesis; L-arginine biosynthesis; L-ornithine and N-acetyl-L-glutamate from L-glutamate and N(2)-acetyl-L-ornithine (cyclic): step 1/1. It participates in amino-acid biosynthesis; L-arginine biosynthesis; N(2)-acetyl-L-ornithine from L-glutamate: step 1/4. Its function is as follows. Catalyzes two activities which are involved in the cyclic version of arginine biosynthesis: the synthesis of N-acetylglutamate from glutamate and acetyl-CoA as the acetyl donor, and of ornithine by transacetylation between N(2)-acetylornithine and glutamate. This Aromatoleum aromaticum (strain DSM 19018 / LMG 30748 / EbN1) (Azoarcus sp. (strain EbN1)) protein is Arginine biosynthesis bifunctional protein ArgJ.